We begin with the raw amino-acid sequence, 426 residues long: Enolase (426 aa).

Residue Gln163 participates in (2R)-2-phosphoglycerate binding. Glu205 serves as the catalytic Proton donor. Mg(2+) contacts are provided by Asp242, Glu285, and Asp312. Positions 337, 366, 367, and 388 each coordinate (2R)-2-phosphoglycerate. The active-site Proton acceptor is the Lys337.

This sequence belongs to the enolase family. It depends on Mg(2+) as a cofactor.

The protein localises to the cytoplasm. Its subcellular location is the secreted. It is found in the cell surface. The enzyme catalyses (2R)-2-phosphoglycerate = phosphoenolpyruvate + H2O. It functions in the pathway carbohydrate degradation; glycolysis; pyruvate from D-glyceraldehyde 3-phosphate: step 4/5. In terms of biological role, catalyzes the reversible conversion of 2-phosphoglycerate (2-PG) into phosphoenolpyruvate (PEP). It is essential for the degradation of carbohydrates via glycolysis. The polypeptide is Enolase (Desulfosudis oleivorans (strain DSM 6200 / JCM 39069 / Hxd3) (Desulfococcus oleovorans)).